The following is a 398-amino-acid chain: Argininosuccinate synthase (398 aa).

Residues 9–17 (AYSGGLDTS) and alanine 36 each bind ATP. 2 residues coordinate L-citrulline: tyrosine 87 and serine 92. Glycine 117 lines the ATP pocket. Threonine 119, asparagine 123, and aspartate 124 together coordinate L-aspartate. L-citrulline is bound at residue asparagine 123. Residues arginine 127, serine 176, serine 185, glutamate 261, and tyrosine 273 each coordinate L-citrulline.

It belongs to the argininosuccinate synthase family. Type 1 subfamily. Homotetramer.

The protein localises to the cytoplasm. The enzyme catalyses L-citrulline + L-aspartate + ATP = 2-(N(omega)-L-arginino)succinate + AMP + diphosphate + H(+). The protein operates within amino-acid biosynthesis; L-arginine biosynthesis; L-arginine from L-ornithine and carbamoyl phosphate: step 2/3. The chain is Argininosuccinate synthase from Desulfotalea psychrophila (strain LSv54 / DSM 12343).